Consider the following 558-residue polypeptide: Alkaline/neutral invertase CINV2 (558 aa).

Serine 16, serine 19, and serine 50 each carry phosphoserine. Residue threonine 79 is modified to Phosphothreonine. A Phosphoserine modification is found at serine 555.

The protein belongs to the glycosyl hydrolase 100 family.

The protein resides in the cytoplasm. The protein localises to the cytosol. The enzyme catalyses Hydrolysis of terminal non-reducing beta-D-fructofuranoside residues in beta-D-fructofuranosides.. Cytosolic invertase that may cleave sucrose into glucose and fructose, and that is involved in the regulation of root growth. May regulate sugar-mediated root development by controlling sucrose catabolism in root cells. This Arabidopsis thaliana (Mouse-ear cress) protein is Alkaline/neutral invertase CINV2.